The primary structure comprises 169 residues: Phosphopantetheine adenylyltransferase (169 aa).

Ser10 contributes to the substrate binding site. Residues 10–11 (SF) and His18 contribute to the ATP site. 3 residues coordinate substrate: Lys42, Thr79, and Arg93. Residues 94–96 (GLR), Glu104, and 129–135 (VRPITAT) contribute to the ATP site.

Belongs to the bacterial CoaD family. Homohexamer. Mg(2+) is required as a cofactor.

It is found in the cytoplasm. It carries out the reaction (R)-4'-phosphopantetheine + ATP + H(+) = 3'-dephospho-CoA + diphosphate. Its pathway is cofactor biosynthesis; coenzyme A biosynthesis; CoA from (R)-pantothenate: step 4/5. Reversibly transfers an adenylyl group from ATP to 4'-phosphopantetheine, yielding dephospho-CoA (dPCoA) and pyrophosphate. The sequence is that of Phosphopantetheine adenylyltransferase from Rhodopseudomonas palustris (strain TIE-1).